We begin with the raw amino-acid sequence, 267 residues long: Small ribosomal subunit protein uS2 (267 aa).

Positions 226–267 (AAAPNSASVREEEFSAESADEGKGRRAPAKKGEKKADAPAAE) are disordered. The span at 245–267 (DEGKGRRAPAKKGEKKADAPAAE) shows a compositional bias: basic and acidic residues.

The protein belongs to the universal ribosomal protein uS2 family.

This chain is Small ribosomal subunit protein uS2, found in Xanthomonas oryzae pv. oryzae (strain MAFF 311018).